A 165-amino-acid polypeptide reads, in one-letter code: Bark lectin isoform 1 (165 aa).

2 N-linked (GlcNAc...) asparagine glycosylation sites follow: N27 and N57. 2 disulfide bridges follow: C33-C80 and C126-C133.

This sequence belongs to the protease inhibitor I3 (leguminous Kunitz-type inhibitor) family. In terms of assembly, dimer.

Functionally, glucose and N-acetylglucosamine binding lectin. Has hemagglutinating activity against human and rabbit erythrocytes which does not require divalent cations. Inhibits factor Xa and, to a lesser extent, trypsin. Does not inhibit neutrophil elastase, human plasma kallikrein, papain, human plasmin, porcine pancreatic kallikrein and bovin chymotrypsin. Has insecticidal activity against the termite species N.corniger. Induces apoptosis in prostrate cancer cell lines DU145 and PC3. This chain is Bark lectin isoform 1, found in Crateva tapia (Garlic-pear tree).